The primary structure comprises 147 residues: UPF0216 protein MK1676 (147 aa).

Belongs to the UPF0216 family.

In Methanopyrus kandleri (strain AV19 / DSM 6324 / JCM 9639 / NBRC 100938), this protein is UPF0216 protein MK1676.